Consider the following 63-residue polypeptide: Small ribosomal subunit protein eS17 (63 aa).

This sequence belongs to the eukaryotic ribosomal protein eS17 family.

The chain is Small ribosomal subunit protein eS17 from Methanosphaerula palustris (strain ATCC BAA-1556 / DSM 19958 / E1-9c).